The following is a 22-amino-acid chain: Mu-conotoxin GIIIC (22 aa).

Disulfide bonds link C3-C15, C4-C20, and C10-C21. P6, P7, and P17 each carry 4-hydroxyproline. Alanine amide is present on A22.

Belongs to the conotoxin M superfamily. Expressed by the venom duct.

It localises to the secreted. Functionally, mu-conotoxins block voltage-gated sodium channels (Nav). This toxin shows potent activity on Nav1.4/SCN4A (IC(50)=286 nM), and weak activity on mNav1.6/SCN8A. This Conus geographus (Geography cone) protein is Mu-conotoxin GIIIC.